Reading from the N-terminus, the 640-residue chain is 1-deoxy-D-xylulose-5-phosphate synthase (640 aa).

Residues His79 and 120-122 (GHS) each bind thiamine diphosphate. Asp151 serves as a coordination point for Mg(2+). Thiamine diphosphate is bound by residues 152 to 153 (GS), Asn180, Tyr290, and Glu372. Asn180 is a Mg(2+) binding site.

Belongs to the transketolase family. DXPS subfamily. As to quaternary structure, homodimer. Mg(2+) serves as cofactor. Requires thiamine diphosphate as cofactor.

It carries out the reaction D-glyceraldehyde 3-phosphate + pyruvate + H(+) = 1-deoxy-D-xylulose 5-phosphate + CO2. It functions in the pathway metabolic intermediate biosynthesis; 1-deoxy-D-xylulose 5-phosphate biosynthesis; 1-deoxy-D-xylulose 5-phosphate from D-glyceraldehyde 3-phosphate and pyruvate: step 1/1. In terms of biological role, catalyzes the acyloin condensation reaction between C atoms 2 and 3 of pyruvate and glyceraldehyde 3-phosphate to yield 1-deoxy-D-xylulose-5-phosphate (DXP). This Rhodopseudomonas palustris (strain BisA53) protein is 1-deoxy-D-xylulose-5-phosphate synthase.